Consider the following 406-residue polypeptide: Diaminopimelate decarboxylase (406 aa).

Lys-52 is modified (N6-(pyridoxal phosphate)lysine). Residues Gly-231 and 265–268 (EPGR) each bind pyridoxal 5'-phosphate. Residues Arg-268, Arg-304, and Tyr-308 each coordinate substrate. Cys-334 serves as the catalytic Proton donor. Positions 335 and 362 each coordinate substrate. A pyridoxal 5'-phosphate-binding site is contributed by Tyr-362.

It belongs to the Orn/Lys/Arg decarboxylase class-II family. LysA subfamily. As to quaternary structure, homodimer. The cofactor is pyridoxal 5'-phosphate.

It carries out the reaction meso-2,6-diaminopimelate + H(+) = L-lysine + CO2. Its pathway is amino-acid biosynthesis; L-lysine biosynthesis via DAP pathway; L-lysine from DL-2,6-diaminopimelate: step 1/1. Specifically catalyzes the decarboxylation of meso-diaminopimelate (meso-DAP) to L-lysine. This is Diaminopimelate decarboxylase from Neisseria meningitidis serogroup A / serotype 4A (strain DSM 15465 / Z2491).